Consider the following 609-residue polypeptide: Adenine deaminase (609 aa).

This sequence belongs to the metallo-dependent hydrolases superfamily. Adenine deaminase family. It depends on Mn(2+) as a cofactor.

It catalyses the reaction adenine + H2O + H(+) = hypoxanthine + NH4(+). The chain is Adenine deaminase from Cenarchaeum symbiosum (strain A).